We begin with the raw amino-acid sequence, 141 residues long: Large ribosomal subunit protein uL11 (141 aa).

This sequence belongs to the universal ribosomal protein uL11 family. Part of the ribosomal stalk of the 50S ribosomal subunit. Interacts with L10 and the large rRNA to form the base of the stalk. L10 forms an elongated spine to which L12 dimers bind in a sequential fashion forming a multimeric L10(L12)X complex. One or more lysine residues are methylated.

In terms of biological role, forms part of the ribosomal stalk which helps the ribosome interact with GTP-bound translation factors. In Sulfurimonas denitrificans (strain ATCC 33889 / DSM 1251) (Thiomicrospira denitrificans (strain ATCC 33889 / DSM 1251)), this protein is Large ribosomal subunit protein uL11.